A 720-amino-acid polypeptide reads, in one-letter code: Probable ATP-dependent RNA helicase DHX35 (720 aa).

One can recognise a Helicase ATP-binding domain in the interval 64–229 (LYLIENYQTV…FNQNETSDPA (166 aa)). 77–84 (GETGCGKS) serves as a coordination point for ATP. The short motif at 176–179 (DEAH) is the DEAH box element. Positions 261 to 438 (TVETVVKIHQ…PVILQLKALG (178 aa)) constitute a Helicase C-terminal domain.

Belongs to the DEAD box helicase family. DEAH subfamily. As to quaternary structure, identified in the spliceosome C complex.

It catalyses the reaction ATP + H2O = ADP + phosphate + H(+). May be involved in pre-mRNA splicing. This Pongo abelii (Sumatran orangutan) protein is Probable ATP-dependent RNA helicase DHX35 (DHX35).